The following is a 2090-amino-acid chain: Ninein (2090 aa).

2 EF-hand domains span residues 8–43 and 42–77; these read QHEA…LSLE and LEEV…ILSR. Residue S152 is modified to Phosphoserine. EF-hand domains follow at residues 182 to 217 and 219 to 252; these read WIEE…YGLQ and VDGE…NGKS. 245–252 contacts GTP; that stretch reads GLFKNGKS. A Phosphoserine modification is found at S269. 300 to 304 provides a ligand contact to GTP; it reads DGMGH. The 36-residue stretch at 317–352 folds into the EF-hand 5 domain; it reads EGIENSQEILKALDFSLDGNINLTELTLALENELLV. Positions 357-570 form a coiled coil; the sequence is IHQAALASFK…YRAQGRVLRL (214 aa). 420 to 423 provides a ligand contact to GTP; it reads RKLD. The tract at residues 574 to 595 is disordered; sequence NSPSEEVEANSGGIEPEHGLGS. Coiled-coil stretches lie at residues 625 to 1027, 1068 to 1099, 1181 to 1341, and 1441 to 1816; these read LRLE…QATS, LSLQ…QKLE, SELE…SVVQ, and QDKH…AGGK. An important for interaction with CEP170 region spans residues 802-1505; the sequence is KMETECNRRT…HDLQITCSEM (704 aa). The disordered stretch occupies residues 1152–1190; it reads VRDLGSTGTSSVQRQEVKIEESEASVEGFSELENSEETR. 2 positions are modified to phosphoserine: S1550 and S1837. Coiled coils occupy residues 1854-1885 and 1922-2067; these read QENE…SNLL and ANRK…QVSL.

In terms of assembly, homooligomer. Interacts with GSK3B/GSK3-beta via its C-terminal domain. Interacts with C14ORF166, such interaction may prevent its phosphorylation by GSK3B. Interacts with AUNIP (via N-terminus). Identified in a complex with AUNIP and AURKA. Interacts with CCDC120. Interacts (via C-terminus) with CEP250. Interacts with CEP170. Interacts with the gamma-tubulin ring complex component TUBGCP3. Interacts with gamma-tubulin. Isoform 6 does not interact with CEP170 or CEP250. Phosphorylated by AURKA/Aurora kinase A and PKA kinases but not CK2 or AURKB/ Aurora kinase B. Ubiquitous. Highly expressed in heart and skeletal muscle. Isoform 1 is more expressed than isoform 5.

Its subcellular location is the cytoplasm. The protein localises to the cytoskeleton. The protein resides in the microtubule organizing center. It localises to the centrosome. It is found in the centriole. In terms of biological role, centrosomal protein required in the positioning and anchorage of the microtubule minus-end in epithelial cells. May also act as a centrosome maturation factor. May play a role in microtubule nucleation, by recruiting the gamma-tubulin ring complex to the centrosome. Overexpression does not perturb nucleation or elongation of microtubules but suppresses release of microtubules. Required for centriole organization and microtubule anchoring at the mother centriole. In Homo sapiens (Human), this protein is Ninein (NIN).